Here is a 364-residue protein sequence, read N- to C-terminus: Ribosomal RNA large subunit methyltransferase M (364 aa).

S-adenosyl-L-methionine-binding positions include serine 194, 227–230, aspartate 246, aspartate 266, and aspartate 284; that span reads CPGG. Lysine 313 acts as the Proton acceptor in catalysis.

It belongs to the class I-like SAM-binding methyltransferase superfamily. RNA methyltransferase RlmE family. RlmM subfamily. In terms of assembly, monomer.

The protein resides in the cytoplasm. It carries out the reaction cytidine(2498) in 23S rRNA + S-adenosyl-L-methionine = 2'-O-methylcytidine(2498) in 23S rRNA + S-adenosyl-L-homocysteine + H(+). Catalyzes the 2'-O-methylation at nucleotide C2498 in 23S rRNA. The protein is Ribosomal RNA large subunit methyltransferase M of Actinobacillus succinogenes (strain ATCC 55618 / DSM 22257 / CCUG 43843 / 130Z).